The following is a 225-amino-acid chain: Orotate phosphoribosyltransferase (225 aa).

Residue Lys31 participates in 5-phospho-alpha-D-ribose 1-diphosphate binding. Position 39 to 40 (39 to 40 (FF)) interacts with orotate. Residues 78-79 (YK), Arg105, Lys106, Lys109, His111, and 130-138 (DDVLTSGKA) contribute to the 5-phospho-alpha-D-ribose 1-diphosphate site. Residues Thr134 and Arg163 each coordinate orotate.

The protein belongs to the purine/pyrimidine phosphoribosyltransferase family. PyrE subfamily. In terms of assembly, homodimer.

It catalyses the reaction orotidine 5'-phosphate + diphosphate = orotate + 5-phospho-alpha-D-ribose 1-diphosphate. Its pathway is pyrimidine metabolism; UMP biosynthesis via de novo pathway; UMP from orotate: step 1/2. Catalyzes the transfer of a ribosyl phosphate group from 5-phosphoribose 1-diphosphate to orotate, leading to the formation of orotidine monophosphate (OMP). The protein is Orotate phosphoribosyltransferase (URA5) of Cryptococcus neoformans var. neoformans serotype D (strain B-3501A) (Filobasidiella neoformans).